A 300-amino-acid polypeptide reads, in one-letter code: Probable membrane transporter protein YtnM (300 aa).

The next 8 membrane-spanning stretches (helical) occupy residues 4–24 (LIVF…LGMA), 33–53 (LLAF…AEVV), 76–96 (LVIP…QLPG), 102–122 (YISL…LFQY), 139–159 (IPLG…WGPV), 206–226 (LWVF…AWLV), 231–251 (PQLM…RTLI), and 260–280 (VHPL…LFVL).

The protein belongs to the 4-toluene sulfonate uptake permease (TSUP) (TC 2.A.102) family.

The protein resides in the cell membrane. The protein is Probable membrane transporter protein YtnM (ytnM) of Bacillus subtilis (strain 168).